Reading from the N-terminus, the 555-residue chain is Probable beta-glucosidase btgE (555 aa).

Residues 1 to 18 (MRGAILATAAAFAGTAVA) form the signal peptide. Disordered regions lie at residues 92–114 (TSSA…VTLP) and 263–290 (TTSA…PTGA). Positions 263–288 (TTSAASTTTAVPSSSTTTSSATSVPT) are enriched in low complexity. E392 (proton donor) is an active-site residue. Residue E488 is the Nucleophile of the active site.

The protein belongs to the glycosyl hydrolase 17 family.

The protein localises to the secreted. Its subcellular location is the cell wall. It catalyses the reaction Hydrolysis of terminal, non-reducing beta-D-glucosyl residues with release of beta-D-glucose.. It functions in the pathway glycan metabolism; cellulose degradation. Its function is as follows. Beta-glucosidases are one of a number of cellulolytic enzymes involved in the degradation of cellulosic biomass. Catalyzes the last step releasing glucose from the inhibitory cellobiose. This Emericella nidulans (strain FGSC A4 / ATCC 38163 / CBS 112.46 / NRRL 194 / M139) (Aspergillus nidulans) protein is Probable beta-glucosidase btgE (btgE).